Consider the following 385-residue polypeptide: POU domain, class 3, transcription factor 2-B (385 aa).

Disordered regions lie at residues 106–136 (LVHP…SSNG), 149–209 (NGMI…TPTS), and 351–385 (EKRM…TSVQ). Residues 122 to 136 (STGSTHLSSMASSNG) are compositionally biased toward polar residues. Residues 165 to 178 (LRDSHDDHHGDHGH) are compositionally biased toward basic and acidic residues. Low complexity predominate over residues 179-196 (QQPSQTQQQQQQHSQLQG). The POU-specific domain maps to 204–278 (EDTPTSDDLE…LLNKWLEEAD (75 aa)). Residues 296–355 (KRKKRTSIEVSVKGALESHFLKCPKPAAQEITSLADSLQLEKEVVRVWFCNRRQKEKRMT) constitute a DNA-binding region (homeobox).

Belongs to the POU transcription factor family. Class-3 subfamily. Expressed in the developing brain and spinal cord. Also found in a restricted region of the auditory vesicle during development. In the adult, expression is restricted to the brain.

It localises to the nucleus. Functionally, transcription factor that may be implicated in patterning of the central nervous system during early development. The chain is POU domain, class 3, transcription factor 2-B (pou3f2-b) from Xenopus laevis (African clawed frog).